The chain runs to 3476 residues: MANRRVGRGCWEVSPTERRPPAGLRGPATEEEASSPPVLSLSHFCRSPFLCFGDVLLGDSRTLPLALDNPNEEVAEVKISHFPAADLGFSVSQRCFVLQPKEKIVISVNWTPFKEGRVREIMTFLVNDVLKHQAILLGNAEKQKKKKRSLWDTIKKKKISASTSHNRRVSNIQNVNKTFSVSQKVDRVRSPLQACENLAMNEGGPPTENNSLTLEENKIPISPISPAFNECHGATCLPLSVRRSTTYSSLHASENRELLNVDSANVSKVSFNEKAVTETSFNSINVNDQSGENSKLILTPNYSSTLNITQSQINFLSPDSFVNNSHGANNELELVTCLSSDMFMTDNSKPVPLQSTIAHEIYQKILSPDSFIKDNYGLNQDLESESVNPILSPNQFLKDNMAYMCTSQQTYKVPLSNENSQVPQSPQDWSKSEVSPCIPEYQGSKSPKAIFEELVEMKSNYYSFIKQNNPKFSAVQDISSHSHDKQPKRRPILSATVTKRKPTCTRENQTEINKPKAKRCLNSAVGEHEKVIHNQKEKEDFHSYLPVIDPVLSKSKSYKNQIMPSLTTASVARKRKSDGSMEDANVRVAVTEHTEEREIKRIHFSPSEPKTSAVKKTKNVITPISKCISNREKLNLKKKTDLLIFKTPISKTSKRTKPIIAVAQSNLTFIKPLKTDIPRHPMPFAAKNMFYDERWKEKQEQGFTWWLNFILTPDDFTVKTNISEVNAATLLLGVENQHKISVPRAPTKEEMSLRAYTARCRLNRLRRAACRLFTSEKMVKAIKKLEIEIEARRLIVRKDRHLWKDVGERQKVLNWLLSYNPLWLRIGLETIYGELISLEDNSDVTGLAMFILNRLLWNPDIAAEYRHPTVPHLYRDGHEGALSKFTLKKLLLLICFLDYAKISXLIDHDPCLFCKDAEFKASKEILLAFSRDFLSGEGDLSRHLGLLGLPVNHVQTPFDEFDFAITNLAVDLQCGVRLVRTMELLTQNWNLSKKLRIPAISRLQKMHNVDIVLQVLKSRGIELSDEHGNTILSKDIVDRHREKTLRLLWKIAFAFQVDISLNLDQLKEEIAFLKHTKSIKKTISLLSCHSDALINKKKGKRDSGSFEQYSENIKLLMDWVNAVCAFYNKKVENFTVSFSDGRVLCYLIHHYHPCYVPXDAICQRTTQTVECTQTGSVVLNSSSESDDSSLDMSLKAFDHENTSELYKELLENEKKNFQLIRSAVRDLGGIPAMINHSDMSNTIPDEKVVITYLSFLCARLLDLRKEIRAARLIQTTWRKYKLKTDLKRHQERDKAARIIQSAVINFLAKQRLRKRVNAALIIQKYWRRVLAQRKLLILKKEKLEKVQNKAASLIQGYWRRYSTRKRFLKLKYYSIILQSRIRMIIAVTSYKRYLWATVTIQRHWRAYLRRKQDQQRYEMLKSSSLIIQSMFRKWKRRKMQSQVKATVILQRAFREWHLRKRAKEENSAIVIQSWYRMHKELRKYIYIRSCVIVIQKRFRCFQAQKLYKRKKESILTIQKYYKAYLKGKIERTNYLQKRAAAIQLQAAFRRLKAHNLCRQIRAACVIQSYWRMRQDRVRFLNLKKTIIKLQAHIRKHQQVQKYKKMKKAAVIIQTHFRAYIFTRKVLASYQKTRSAVIVLQSAYRGMQARKVYIHILTSVIKIQSYYRAYVSKKEFLSLKNTTIKLQSIVKMKQTRKQYLHLRAAALFIQQCYRSKKITTQKREEYMQMRESCIKLQAFVRGYLVRKQMRLQRKAVISLQSYFRMRKARQYYLKMCKAIIVIQNYYHAYKAQVNQRKNFLRVKKAATCLQAAYRGYKVRQLIKQQSIAALKIQSAFRGYNKRVKYQSVLQSIIKIQRWYRAYKTLHDTRTRFLKTKAAVVSLQSAYRGWKVRKQIRREHQAALKIQSAFRMAKAQKQFRLFKTAALVIQQNFRAWTAGRKQRMEYIELRHAVLILQSMWKGKTLRRQLQRQXKCAIIIQSYYRMHVQQKKWKIMKKAALLIQKYYKAYSIGREQHHLYLKTKAAVVTLQSAYRGMKVRKRIKDCNKAAVTIQSKYRAYKTKKKYATYRASAIIIQRWYRGIKITHXXHQEYLNLKKTAIKIQSVYRGIRVRRHIQHMHRAATFIKAMFKMHQSRISYHTMRKAAIVIQVRFRAYYQGKMHREKYLTILKAVKILQASFRGVXVRWTLRKMQIAATLIQSNYRRYKQQTYFNKLKKITKTIQQRYRAVKERNIQFKRYNKLRHSVIYIQAIFRGKKARRHLKMMHVAATLIQRRFRTLMMRRRFLSLKKTAVWIQRKYRAHLCTKHHLQFLQVQNAVIKIQSSYRRWMIRKKMREMHRAATFIQATFRMHRVHMRYQALKQASVVIQQQYXANRAAKLQRQHYLRQRRSAVILQAAFRGVKTRRHLKSMHSSATLIQSRFRSLLVRRRFISLKKATIFVQRKYRATICAKHKLHQFLQLRKAAITIQSSYRRLMVKKKLQEMQRAAVLIQATFRMHRTCVTFQTWKQASILIQQHYRTYRAAKLQKENYIRQWHSAVVIQTAYKGMKARQHLREKHKAAIIIQSTYRMYRQYCFYQKLQWATKIIQEKYRANKKKQKALQHNELKKETCVQASFQDMNIQKQIQEQHQAAIIIQKHCKAFKIRKHYLHLRATVVSIQRRYRKLTAVRTQAVICIQSYYRGFKVRRDIQNMHRAATLIQSFYRMHRAKVDYQTKKTAIVVIQNYYRLYVRVKTERKSFLPVQKSVRTIQAAFRGMKVRQKLKIVSEEKMAAIVNQSALCCYRSKTQYEAVQSEGVMIQEWYKASDLACSQEAECHSQSRAAVTIQNAFRRMVTRKLETQKCAALRIQFFLQMAVYRRRFVQQKRAAITLQHYFRTWQTRKQFLLYRKAAVVLQNHYRAFLSAKHQRQVYLQIRSSVIIIQARSKGFIQKRKFQEIKNSTIKIQAMWRRYRAKKYLCKVKAACKIQAWYRCWRAHKEYLAILKAVKIIQGCFYTKLERTWFLNVRASAIIIQRKWRAILSAKIAHEHFLMIKRHRAACLIQAHYRGYKERQVFLRQKSAALIIQKYIRAREAGKRERIKYIEFKKSTVILQALVRGWLVRKRILEQKTKIRLLHFTAAAYYHLNALRIQRAYKLYLAVKNANKQVNSVICIQRWFRARLQQKKFIQKYSIKKIEHEGQECLSQQNRAASVIQKAVRHFVLRKKQEKFTSGIIKIQALWRGYSWRKKNDCTKIKAIRLSLQVVNREIREENKLYKRTALALHYLLTYKHLSAILEALKHLEVVTRLSPLCCENMAQSGAISKIFVLIRSCNRSVPCMEVIRYAVQVLLNVSKYEKTTSAVYDVENCIDTLLELLQIYREKPGNKVADKGGSIFTKTCCLLAVLLKTTNRASDVRSRSKVVDRIYSLYKLTAHKHKMNTERILHKQKKNSSISIPFIPXTPVRTRIVSRLKPDWVLRRDNMEEITNPLQAIQMVMDTLGIPY.

Residues 1–34 (MANRRVGRGCWEVSPTERRPPAGLRGPATEEEAS) form a disordered region. 6 positions are modified to phosphoserine: S280, S283, S367, S392, S425, and S605. Residues 920–1056 (KASKEILLAF…LLWKIAFAFQ (137 aa)) form the Calponin-homology (CH) 1 domain. The stretch at 1057 to 1078 (VDISLNLDQLKEEIAFLKHTKS) forms a coiled coil. S1103 is modified (phosphoserine). The region spanning 1110–1261 (SENIKLLMDW…YLSFLCARLL (152 aa)) is the Calponin-homology (CH) 2 domain. 38 consecutive IQ domains span residues 1347–1378 (QNKA…IILQ), 1393–1422 (YLWA…MLKS), 1582–1613 (LKKT…VIIQ), 1605–1634 (MKKA…KTRS), 1632–1661 (TRSA…SVIK), 1655–1684 (ILTS…TTIK), 1728–1757 (MRES…AVIS), 1751–1782 (QRKA…IVIQ), 1801–1830 (VKKA…AALK), 1824–1853 (QSIA…SIIK), 1874–1903 (TKAA…AALK), 1897–1928 (EHQA…LVIQ), 1947–1978 (LRHA…IIIQ), 1970–2001 (QXKC…LLIQ), 2020–2049 (TKAA…AAVT), 2043–2074 (CNKA…IIIQ), 2093–2124 (LKKT…TFIK), 2116–2147 (MHRA…IVIQ), 2239–2270 (LRHS…TLIQ), 2262–2293 (MHVA…VWIQ), 2311–2342 (VQNA…TFIQ), 2334–2365 (MHRA…VVIQ), 2384–2415 (QRRS…TLIQ), 2407–2438 (MHSS…IFVQ), 2457–2488 (LRKA…VLIQ), 2530–2561 (QWHS…IIIQ), 2624–2653 (QHQA…TVVS), 2665–2696 (RTQA…TLIQ), 2688–2719 (MHRA…VVIQ), 2738–2767 (VQKS…EKMA), 2814–2845 (QSRA…RIQF), 2859–2890 (QKRA…VVLQ), 2909–2938 (IRSS…STIK), 2932–2963 (IKNS…KIQA), 2954–2985 (KVKA…KIIQ), 3029–3060 (RHRA…LIIQ), 3079–3110 (FKKS…RLLH), and 3203–3234 (FTSG…IRLS).

The protein localises to the cytoplasm. Its subcellular location is the cytoskeleton. It is found in the spindle. The protein resides in the nucleus. Functionally, probable role in mitotic spindle regulation and coordination of mitotic processes. May have a preferential role in regulating neurogenesis. The chain is Abnormal spindle-like microcephaly-associated protein homolog (ASPM) from Macaca fascicularis (Crab-eating macaque).